Reading from the N-terminus, the 71-residue chain is Putative antitoxin VapB14 (71 aa).

Its function is as follows. Putative antitoxin component of a possible type II toxin-antitoxin (TA) system. The cognate toxin is VapB14. The sequence is that of Putative antitoxin VapB14 (vapB14) from Mycobacterium tuberculosis (strain ATCC 25618 / H37Rv).